The following is a 156-amino-acid chain: MIP18 family protein galla-2 (156 aa).

The protein belongs to the MIP18 family. As to quaternary structure, component of the CGX complex composed of crb, galla (galla-1 or galla-2) and Xpd. Interacts with crb (via intracellular domain). Also able to interact with Xpd in the absence of crb. Interacts with Mms19.

Component of the crb-galla-Xpd (CGX) complex which is essential for proper mitotic chromosome segregation in early embryos. The CGX complex is also required for cell proliferation in developing wing disks. In the CGX complex, acts with crb to recruit Xpd thus forming the functional complex. The polypeptide is MIP18 family protein galla-2 (Drosophila melanogaster (Fruit fly)).